A 535-amino-acid polypeptide reads, in one-letter code: T-complex protein 1 subunit epsilon (535 aa).

It belongs to the TCP-1 chaperonin family. As to quaternary structure, heterooligomeric complex of about 850 to 900 kDa that forms two stacked rings, 12 to 16 nm in diameter.

The protein localises to the cytoplasm. In terms of biological role, molecular chaperone; assists the folding of proteins upon ATP hydrolysis. Known to play a role, in vitro, in the folding of actin and tubulin. This Avena sativa (Oat) protein is T-complex protein 1 subunit epsilon.